Consider the following 512-residue polypeptide: tRNA-2-methylthio-N(6)-dimethylallyladenosine synthase (512 aa).

Residues 23 to 139 (RTYQVRTYGC…LPTLLERARH (117 aa)) enclose the MTTase N-terminal domain. Residues cysteine 32, cysteine 68, cysteine 102, cysteine 176, cysteine 180, and cysteine 183 each coordinate [4Fe-4S] cluster. The region spanning 162-398 (RESAYAAWVS…IELQERISLE (237 aa)) is the Radical SAM core domain. Residues 401-469 (REQVGRAVEL…PHHLIADAPI (69 aa)) form the TRAM domain. Residues 477-512 (AGDAHAAGQKPRTGVGLGMPRIGAPAPSATAEGCGC) form a disordered region.

Belongs to the methylthiotransferase family. MiaB subfamily. As to quaternary structure, monomer. [4Fe-4S] cluster is required as a cofactor.

The protein resides in the cytoplasm. It carries out the reaction N(6)-dimethylallyladenosine(37) in tRNA + (sulfur carrier)-SH + AH2 + 2 S-adenosyl-L-methionine = 2-methylsulfanyl-N(6)-dimethylallyladenosine(37) in tRNA + (sulfur carrier)-H + 5'-deoxyadenosine + L-methionine + A + S-adenosyl-L-homocysteine + 2 H(+). Its function is as follows. Catalyzes the methylthiolation of N6-(dimethylallyl)adenosine (i(6)A), leading to the formation of 2-methylthio-N6-(dimethylallyl)adenosine (ms(2)i(6)A) at position 37 in tRNAs that read codons beginning with uridine. The polypeptide is tRNA-2-methylthio-N(6)-dimethylallyladenosine synthase (Mycolicibacterium smegmatis (strain ATCC 700084 / mc(2)155) (Mycobacterium smegmatis)).